A 356-amino-acid polypeptide reads, in one-letter code: 5-formaminoimidazole-4-carboxamide-1-(beta)-D-ribofuranosyl 5'-monophosphate synthetase (356 aa).

The 5-amino-1-(5-phospho-beta-D-ribosyl)imidazole-4-carboxamide site is built by His-27 and Ser-94. The region spanning 101–333 (TENFAELTVP…YADLIQEDLS (233 aa)) is the ATP-grasp domain. ATP contacts are provided by residues 145–196 (PRDI…TRYY) and Glu-226. Asn-255 contacts 5-amino-1-(5-phospho-beta-D-ribosyl)imidazole-4-carboxamide. Positions 293 and 306 each coordinate Mg(2+).

This sequence belongs to the phosphohexose mutase family. Requires Mg(2+) as cofactor. It depends on Mn(2+) as a cofactor.

The enzyme catalyses 5-amino-1-(5-phospho-beta-D-ribosyl)imidazole-4-carboxamide + formate + ATP = 5-formamido-1-(5-phospho-D-ribosyl)imidazole-4-carboxamide + ADP + phosphate. Its pathway is purine metabolism; IMP biosynthesis via de novo pathway; 5-formamido-1-(5-phospho-D-ribosyl)imidazole-4-carboxamide from 5-amino-1-(5-phospho-D-ribosyl)imidazole-4-carboxamide (formate route): step 1/1. Catalyzes the ATP- and formate-dependent formylation of 5-aminoimidazole-4-carboxamide-1-beta-d-ribofuranosyl 5'-monophosphate (AICAR) to 5-formaminoimidazole-4-carboxamide-1-beta-d-ribofuranosyl 5'-monophosphate (FAICAR) in the absence of folates. The chain is 5-formaminoimidazole-4-carboxamide-1-(beta)-D-ribofuranosyl 5'-monophosphate synthetase from Methanosarcina acetivorans (strain ATCC 35395 / DSM 2834 / JCM 12185 / C2A).